Consider the following 714-residue polypeptide: Sodium-dependent acetylcholine transporter (714 aa).

Positions 1–21 (MSVSSNDPEQRNGRGMASGNN) are disordered. Residues 1–74 (MSVSSNDPEQ…GNWSNKSDYL (74 aa)) are Cytoplasmic-facing. The next 3 membrane-spanning stretches (helical) occupy residues 75–95 (LAVIGFTAGVGSFWKFPFLVF), 100–120 (AAFLVPYLCMLCLASLPMFFM), and 152–172 (ISGFFAVFFNIISAWTLFYLI). Topologically, residues 173–257 (NSFSFSIPWS…LSKGVDDFGT (85 aa)) are extracellular. Residues Asn192, Asn205, Asn211, and Asn222 are each glycosylated (N-linked (GlcNAc...) asparagine). A run of 9 helical transmembrane segments spans residues 258-278 (LNWYLGLCVLACWIAVFLCLF), 287-307 (VVYVAVIVPFIILTVLLTRLL), 336-356 (AAVQAFYSVSCCSGGLFTIAS), 368-388 (IWLVLIVDVIVSLVGCLLTFS), 422-442 (AGVSVAPLYAGLFFIMILLVV), 476-496 (VCALFILLSIPFCLSSGLFWM), 502-522 (FVLTWPLVVIAFLECMAINWV), 548-568 (ILFKFICPMVYLAILCFLWLD), and 584-604 (ILTAWCIASFPLILIPIVGIW). Residues 605–714 (QFCIAKGTIT…IPKFERETAI (110 aa)) lie on the Cytoplasmic side of the membrane.

Belongs to the sodium:neurotransmitter symporter (SNF) (TC 2.A.22) family. In terms of assembly, interacts with stn-1; part of the DGC. Body wall, and vulval and enteric muscles.

The protein localises to the cell membrane. It is found in the postsynaptic cell membrane. Functionally, mediates sodium-dependent uptake of acetylcholine at neuromuscular junctions during periods of increased synaptic activity, may also prevent spillover to adjacent synaptic sites. Not involved in the uptake of other neurotransmitters (GABA, glycine, proline and glutamate) and there was also no inhibition of uptake by adding an excess of other candidate substrates (GABA, glycine, taurine, creatine, proline, alanine, carnitine, glutamate and betaine). Required for muscle integrity; altered transport of acetylcholine due to loss of dystrophin-glycoprotein complex (DGC) function results in muscle degeneration. The sequence is that of Sodium-dependent acetylcholine transporter from Caenorhabditis elegans.